Consider the following 64-residue polypeptide: Leader peptide SpeFL (64 aa).

Positions 32 to 38 (HIRRTRH) match the Ornithine recognition loop motif. Position 35 (Arg-35) interacts with L-ornithine.

It belongs to the speF operon leader peptide family. As to quaternary structure, binds ornithine in stalled 70S ribosomes, blocking the upper two-thirds of the exit tunnel. Contacts 23S rRNA and ribosomal proteins L4 and L22.

In terms of biological role, a small protein (arrest peptide) encoded upstream of inducible ornithine carboxylase gene (speF) that controls expression of downstream genes (usually speF and potE) by transcriptional and translational attenuation. This is Leader peptide SpeFL from Haemophilus influenzae (strain ATCC 51907 / DSM 11121 / KW20 / Rd).